Here is a 350-residue protein sequence, read N- to C-terminus: Dihydroorotase (350 aa).

Zn(2+)-binding residues include His-13 and His-15. Residues His-15–Arg-17 and Asn-41 each bind substrate. Residues Lys-99, His-136, and His-174 each coordinate Zn(2+). The residue at position 99 (Lys-99) is an N6-carboxylysine. His-136 is a binding site for substrate. Position 219 (Leu-219) interacts with substrate. Asp-247 contacts Zn(2+). The active site involves Asp-247. Substrate contacts are provided by His-251 and Ala-263.

The protein belongs to the metallo-dependent hydrolases superfamily. DHOase family. Class II DHOase subfamily. Homodimer. Requires Zn(2+) as cofactor.

It catalyses the reaction (S)-dihydroorotate + H2O = N-carbamoyl-L-aspartate + H(+). Its pathway is pyrimidine metabolism; UMP biosynthesis via de novo pathway; (S)-dihydroorotate from bicarbonate: step 3/3. Catalyzes the reversible cyclization of carbamoyl aspartate to dihydroorotate. This chain is Dihydroorotase, found in Allorhizobium ampelinum (strain ATCC BAA-846 / DSM 112012 / S4) (Agrobacterium vitis (strain S4)).